We begin with the raw amino-acid sequence, 200 residues long: MYAYIKGTLTELNPTHVVVEASGVGYEIQTPNSYRFQKYMDHEVVVHTSLIVREDAQLLYGFINQEEKDMFLSLIKVTGIGPKSALAILASSSPNDVKIAIENENDAYLTKFPGIGKKTARQIVLDLKGKVQINDVDSSQILNTDTQDHANAPIIKEALLALEALGYSKRELTKVEKSLSKETFDSVDDAVKRGLQLLIA.

Residues methionine 1–isoleucine 63 form a domain I region. The interval asparagine 64 to leucine 142 is domain II. Residues asparagine 143–histidine 149 are flexible linker. The segment at alanine 150–alanine 200 is domain III.

This sequence belongs to the RuvA family. Homotetramer. Forms an RuvA(8)-RuvB(12)-Holliday junction (HJ) complex. HJ DNA is sandwiched between 2 RuvA tetramers; dsDNA enters through RuvA and exits via RuvB. An RuvB hexamer assembles on each DNA strand where it exits the tetramer. Each RuvB hexamer is contacted by two RuvA subunits (via domain III) on 2 adjacent RuvB subunits; this complex drives branch migration. In the full resolvosome a probable DNA-RuvA(4)-RuvB(12)-RuvC(2) complex forms which resolves the HJ.

The protein resides in the cytoplasm. Its function is as follows. The RuvA-RuvB-RuvC complex processes Holliday junction (HJ) DNA during genetic recombination and DNA repair, while the RuvA-RuvB complex plays an important role in the rescue of blocked DNA replication forks via replication fork reversal (RFR). RuvA specifically binds to HJ cruciform DNA, conferring on it an open structure. The RuvB hexamer acts as an ATP-dependent pump, pulling dsDNA into and through the RuvAB complex. HJ branch migration allows RuvC to scan DNA until it finds its consensus sequence, where it cleaves and resolves the cruciform DNA. This Staphylococcus saprophyticus subsp. saprophyticus (strain ATCC 15305 / DSM 20229 / NCIMB 8711 / NCTC 7292 / S-41) protein is Holliday junction branch migration complex subunit RuvA.